The following is a 107-amino-acid chain: DNA polymerase delta subunit 4 (107 aa).

The short motif at 1–16 (MGRKRLITDSYPVVKR) is the PCNA-interaction protein motif (PIP box) element. The interval 1–44 (MGRKRLITDSYPVVKRREGPAGHSKGELAPELGEEPQPRDEEEA) is disordered. Over residues 15–28 (KRREGPAGHSKGEL) the composition is skewed to basic and acidic residues.

Belongs to the DNA polymerase delta subunit 4 family. In terms of assembly, component of the tetrameric DNA polymerase delta complex (Pol-delta4), which consists of POLD1/p125, POLD2/p50, POLD3/p66/p68 and POLD4/p12, with POLD1 bearing DNA polymerase and 3' to 5' proofreading exonuclease activities. Within this complex, directly interacts with POLD1 and POLD2. Directly interacts with PCNA, as do POLD1 and POLD3; this interaction stimulates Pol-delta4 polymerase activity. As POLD1 and POLD2, directly interacts with WRNIP1; this interaction stimulates DNA polymerase delta-mediated DNA synthesis, independently of the presence of PCNA. This stimulation may be due predominantly to an increase of initiation frequency and also to increased processivity. Upon genotoxic stress induced by DNA damaging agents or by replication stress, POLD4 is proteolytically degraded and Pol-delta4 is converted into a trimeric form of the complex (Pol-delta3) which has an increased proofreading activity. The DNA polymerase delta complex interacts with POLDIP2; this interaction is probably mediated through direct binding to POLD2. In terms of processing, ubiquitinated; undergoes 'Lys-48'-linked ubiquitination in response to UV irradiation, leading to proteasomal degradation. This modification is partly mediated by RNF8 and by the DCX(DTL) E3 ubiquitin ligase complex (also called CRL4(CDT2)). Efficient degradation requires the presence of PCNA and is required for the inhibition of fork progression after DNA damage.

It localises to the nucleus. In terms of biological role, as a component of the tetrameric DNA polymerase delta complex (Pol-delta4), plays a role in high fidelity genome replication and repair. Within this complex, increases the rate of DNA synthesis and decreases fidelity by regulating POLD1 polymerase and proofreading 3' to 5' exonuclease activity. Pol-delta4 participates in Okazaki fragment processing, through both the short flap pathway, as well as a nick translation system. Under conditions of DNA replication stress, required for the repair of broken replication forks through break-induced replication (BIR), a mechanism that may induce segmental genomic duplications of up to 200 kb. Involved in Pol-delta4 translesion synthesis (TLS) of templates carrying O6-methylguanine or abasic sites. Its degradation in response to DNA damage is required for the inhibition of fork progression and cell survival. The chain is DNA polymerase delta subunit 4 (POLD4) from Homo sapiens (Human).